The chain runs to 156 residues: SsrA-binding protein (156 aa).

The protein belongs to the SmpB family.

The protein localises to the cytoplasm. Required for rescue of stalled ribosomes mediated by trans-translation. Binds to transfer-messenger RNA (tmRNA), required for stable association of tmRNA with ribosomes. tmRNA and SmpB together mimic tRNA shape, replacing the anticodon stem-loop with SmpB. tmRNA is encoded by the ssrA gene; the 2 termini fold to resemble tRNA(Ala) and it encodes a 'tag peptide', a short internal open reading frame. During trans-translation Ala-aminoacylated tmRNA acts like a tRNA, entering the A-site of stalled ribosomes, displacing the stalled mRNA. The ribosome then switches to translate the ORF on the tmRNA; the nascent peptide is terminated with the 'tag peptide' encoded by the tmRNA and targeted for degradation. The ribosome is freed to recommence translation, which seems to be the essential function of trans-translation. The polypeptide is SsrA-binding protein (Clostridium beijerinckii (strain ATCC 51743 / NCIMB 8052) (Clostridium acetobutylicum)).